Reading from the N-terminus, the 35-residue chain is Apolipophorin-3 (35 aa).

As to quaternary structure, equilibrium between a soluble monomer and a bound lipoprotein form. Apolipophorin-3 associates with lipophorin during lipid loading until each particle contains 9 or 14 molecules of apolipophorin-3. As to expression, hemolymph.

The protein localises to the secreted. Assists in the loading of diacylglycerol, generated from triacylglycerol stores in the fat body through the action of adipokinetic hormone, into lipophorin, the hemolymph lipoprotein. It increases the lipid carrying capacity of lipophorin by covering the expanding hydrophobic surface resulting from diacylglycerol uptake. It thus plays a critical role in the transport of lipids during flight in several species of insects. Has hemagglutinating activity towards rabbit erythrocytes. This chain is Apolipophorin-3, found in Heliothis virescens (Tobacco budworm moth).